Here is a 382-residue protein sequence, read N- to C-terminus: Na(+)/H(+) antiporter NhaA 2 (382 aa).

The next 11 membrane-spanning stretches (helical) occupy residues 7 to 27 (MVLS…LALL), 58 to 78 (LDLW…GLEL), 94 to 114 (SLPI…FIAI), 124 to 144 (GWAI…MLLG), 153 to 173 (LFLL…IALF), 178 to 198 (LSAL…LLNY), 199 to 219 (YHIT…IAML), 255 to 275 (NPWV…GIDI), 291 to 311 (IILG…FIAI), 327 to 347 (FYGI…IDGL), and 361 to 381 (LAIL…LKIV).

The protein belongs to the NhaA Na(+)/H(+) (TC 2.A.33) antiporter family.

The protein resides in the cell inner membrane. It carries out the reaction Na(+)(in) + 2 H(+)(out) = Na(+)(out) + 2 H(+)(in). Functionally, na(+)/H(+) antiporter that extrudes sodium in exchange for external protons. This Campylobacter jejuni (strain RM1221) protein is Na(+)/H(+) antiporter NhaA 2.